The sequence spans 93 residues: Parbolysin P1 (93 aa).

3 cysteine pairs are disulfide-bonded: Cys-16-Cys-37, Cys-22-Cys-33, and Cys-47-Cys-60.

Belongs to the worm cytolysin family. Localized within the skin and proboscis and are most readily isolated from body mucus secretions.

It is found in the secreted. Its function is as follows. Cytolysin that shows hemolytic activity (on bovine erythrocytes, HC(50)=5.75 mg/ml). This hemolytic activity is completely inhibited by small unilamelar vesicles composed of PC/PG, PC/PI and PC/PS in 1:1 molar ratios (with at least 100 mg/ml concentration). The recombinant protein does not show hemolytic activity, suggesting that it is not properly folded or that it requires a free N-terminal end for its activity. The polypeptide is Parbolysin P1 (Parborlasia corrugatus (Antarctic nemertean worm)).